The sequence spans 230 residues: MITQKGKEHLVKDKQKSNIYLRILSGIVLVPLFVIAILWCKPLFYILMILVGTGMLSEWYNMTYSSIPDLLIGLIIIPIPISLLIFLSMEDTNRWLIMLYFCIMWSVDTFAMIGGKTFKGAKLAPKLSPKKTWSGLVTGVLSAGLVAVLVSFIPNFHIENYYFSNKIYLFIISCILALIAQLSDLFISYFKRKFNIKDSGHIIPGHGGVLDRFDSIILTTLILFLMKIYL.

6 helical membrane passes run 33–53, 67–87, 95–115, 133–153, 167–187, and 206–226; these read FVIA…LVGT, IPDL…LIFL, WLIM…MIGG, WSGL…VSFI, IYLF…DLFI, and HGGV…LFLM.

The protein belongs to the CDS family.

It localises to the cell membrane. It carries out the reaction a 1,2-diacyl-sn-glycero-3-phosphate + CTP + H(+) = a CDP-1,2-diacyl-sn-glycerol + diphosphate. The protein operates within phospholipid metabolism; CDP-diacylglycerol biosynthesis; CDP-diacylglycerol from sn-glycerol 3-phosphate: step 3/3. In Rickettsia conorii (strain ATCC VR-613 / Malish 7), this protein is Phosphatidate cytidylyltransferase (cdsA).